The following is a 352-amino-acid chain: Sodium-lithium/proton antiporter (352 aa).

8 helical membrane-spanning segments follow: residues 11-31 (ILLL…PVSV), 32-52 (PLII…WMQF), 61-81 (AVTI…TYAV), 159-179 (IPEY…FMLE), 216-236 (AQFL…FWIT), 241-261 (IVMS…SIVI), 271-291 (IVGD…LLAI), and 317-337 (IGLQ…VIAF).

The protein belongs to the autoinducer-2 exporter (AI-2E) (TC 2.A.86) family.

The protein localises to the cell membrane. Its function is as follows. Catalyzes the pH-dependent efflux of sodium and lithium in exchange for external protons. The protein is Sodium-lithium/proton antiporter of Halobacillus andaensis.